Consider the following 543-residue polypeptide: CTP synthase (543 aa).

Positions 1–265 (MTRYIFVTGG…DDIVVERFGL (265 aa)) are amidoligase domain. A CTP-binding site is contributed by Ser13. Ser13 contacts UTP. Residues 14–19 (SLGKGI) and Asp71 contribute to the ATP site. 2 residues coordinate Mg(2+): Asp71 and Glu139. CTP-binding positions include 146 to 148 (DIE), 186 to 191 (KTKPTQ), and Lys222. Residues 186–191 (KTKPTQ) and Lys222 contribute to the UTP site. A Glutamine amidotransferase type-1 domain is found at 290-541 (TIAMVGKYME…VNAALAQKAR (252 aa)). Gly351 contacts L-glutamine. Catalysis depends on Cys378, which acts as the Nucleophile; for glutamine hydrolysis. Residues 379–382 (LGMQ), Glu402, and Arg469 contribute to the L-glutamine site. Catalysis depends on residues His514 and Glu516.

Belongs to the CTP synthase family. As to quaternary structure, homotetramer.

The catalysed reaction is UTP + L-glutamine + ATP + H2O = CTP + L-glutamate + ADP + phosphate + 2 H(+). It carries out the reaction L-glutamine + H2O = L-glutamate + NH4(+). The enzyme catalyses UTP + NH4(+) + ATP = CTP + ADP + phosphate + 2 H(+). It functions in the pathway pyrimidine metabolism; CTP biosynthesis via de novo pathway; CTP from UDP: step 2/2. Its activity is regulated as follows. Allosterically activated by GTP, when glutamine is the substrate; GTP has no effect on the reaction when ammonia is the substrate. The allosteric effector GTP functions by stabilizing the protein conformation that binds the tetrahedral intermediate(s) formed during glutamine hydrolysis. Inhibited by the product CTP, via allosteric rather than competitive inhibition. Its function is as follows. Catalyzes the ATP-dependent amination of UTP to CTP with either L-glutamine or ammonia as the source of nitrogen. Regulates intracellular CTP levels through interactions with the four ribonucleotide triphosphates. The sequence is that of CTP synthase from Azotobacter vinelandii (strain DJ / ATCC BAA-1303).